The following is a 558-amino-acid chain: Xylulose kinase 2 (558 aa).

Substrate-binding positions include D16, 20–23 (QSMK), S111, and D283. ATP-binding positions include T305 and 456–460 (GASAN).

This sequence belongs to the FGGY kinase family. The cofactor is a divalent metal cation.

Its subcellular location is the cytoplasm. It catalyses the reaction D-xylulose + ATP = D-xylulose 5-phosphate + ADP + H(+). The protein operates within isoprenoid biosynthesis; carotenoid biosynthesis. With respect to regulation, repressed by oxo-clomazone (keto-clomazone), a bleaching herbicide. Mediates 1-deoxy-D-xylulose (DX) phosphorylation in the cytoplasm prior to the translocation of 1-deoxy-D-xylulose 5-phosphate into plastids. Can also phosphorylate D-xylulose (Xyl). Uses preferentially ATP as cosubstrate. This Arabidopsis thaliana (Mouse-ear cress) protein is Xylulose kinase 2.